Reading from the N-terminus, the 77-residue chain is U8-lycotoxin-Ls1d (77 aa).

Positions 1-20 (MKLIIFTGLVLFAIVSLIEA) are cleaved as a signal peptide. Positions 21–26 (QAENEK) are excised as a propeptide.

This sequence belongs to the neurotoxin 19 (CSTX) family. 08 (U8-Lctx) subfamily. Post-translationally, contains 4 disulfide bonds. Expressed by the venom gland.

The protein resides in the secreted. This chain is U8-lycotoxin-Ls1d, found in Lycosa singoriensis (Wolf spider).